A 901-amino-acid chain; its full sequence is HTH-type transcriptional regulator MalT (901 aa).

39–46 (SPAGYGKT) contacts ATP. One can recognise an HTH luxR-type domain in the interval 829-894 (ELIRTSPLTQ…AAVQHAQKLL (66 aa)). The H-T-H motif DNA-binding region spans 853–872 (NEQIAGELEVAATTIKTHIR).

The protein belongs to the MalT family. In terms of assembly, monomer in solution. Oligomerizes to an active state in the presence of the positive effectors ATP and maltotriose.

Activated by ATP and maltotriose, which are both required for DNA binding. Functionally, positively regulates the transcription of the maltose regulon whose gene products are responsible for uptake and catabolism of malto-oligosaccharides. Specifically binds to the promoter region of its target genes, recognizing a short DNA motif called the MalT box. The sequence is that of HTH-type transcriptional regulator MalT from Escherichia coli O45:K1 (strain S88 / ExPEC).